A 428-amino-acid chain; its full sequence is Putative zinc metalloprotease LL2128 (428 aa).

Zn(2+) is bound at residue His19. Glu20 is a catalytic residue. His23 lines the Zn(2+) pocket. Helical transmembrane passes span 188–210, 354–376, and 401–423; these read GPLN…QGGV, IVYL…IPVL, and IITM…NDIL. In terms of domain architecture, PDZ spans 188–282; that stretch reads GPLNNFILGI…SETLSVTPKK (95 aa).

This sequence belongs to the peptidase M50B family. The cofactor is Zn(2+).

The protein localises to the cell membrane. This Lactococcus lactis subsp. lactis (strain IL1403) (Streptococcus lactis) protein is Putative zinc metalloprotease LL2128.